Here is a 105-residue protein sequence, read N- to C-terminus: Large ribosomal subunit protein uL24 (105 aa).

The protein belongs to the universal ribosomal protein uL24 family. As to quaternary structure, part of the 50S ribosomal subunit.

Functionally, one of two assembly initiator proteins, it binds directly to the 5'-end of the 23S rRNA, where it nucleates assembly of the 50S subunit. Its function is as follows. One of the proteins that surrounds the polypeptide exit tunnel on the outside of the subunit. This is Large ribosomal subunit protein uL24 from Mycobacterium sp. (strain JLS).